Consider the following 52-residue polypeptide: ATP synthase protein 8 (52 aa).

A helical membrane pass occupies residues 7 to 23; the sequence is MMWFSLFIMFSMTMMLF.

It belongs to the ATPase protein 8 family. In terms of assembly, F-type ATPases have 2 components, CF(1) - the catalytic core - and CF(0) - the membrane proton channel.

The protein resides in the mitochondrion membrane. Functionally, mitochondrial membrane ATP synthase (F(1)F(0) ATP synthase or Complex V) produces ATP from ADP in the presence of a proton gradient across the membrane which is generated by electron transport complexes of the respiratory chain. F-type ATPases consist of two structural domains, F(1) - containing the extramembraneous catalytic core and F(0) - containing the membrane proton channel, linked together by a central stalk and a peripheral stalk. During catalysis, ATP synthesis in the catalytic domain of F(1) is coupled via a rotary mechanism of the central stalk subunits to proton translocation. Part of the complex F(0) domain. Minor subunit located with subunit a in the membrane. The chain is ATP synthase protein 8 (MT-ATP8) from Locusta migratoria (Migratory locust).